Consider the following 273-residue polypeptide: Tryptophan synthase alpha chain (273 aa).

Active-site proton acceptor residues include E56 and D67.

This sequence belongs to the TrpA family. In terms of assembly, tetramer of two alpha and two beta chains.

The catalysed reaction is (1S,2R)-1-C-(indol-3-yl)glycerol 3-phosphate + L-serine = D-glyceraldehyde 3-phosphate + L-tryptophan + H2O. Its pathway is amino-acid biosynthesis; L-tryptophan biosynthesis; L-tryptophan from chorismate: step 5/5. Its function is as follows. The alpha subunit is responsible for the aldol cleavage of indoleglycerol phosphate to indole and glyceraldehyde 3-phosphate. This chain is Tryptophan synthase alpha chain, found in Shewanella baltica (strain OS155 / ATCC BAA-1091).